Consider the following 280-residue polypeptide: MTILQAIVLAIVEGLTEFLPVSSTGHMIIAEGIMGVESTSFVRAFTVMIQFGAILSVLVLYRKRFFCFPVAPRALGQGKGKEFMSRFDLYWKLLIALVPAVILGFLFEDWVDRMLGSVWVVAVVLFLGGIFMLFVDKLFASSDRGEITYPKAFVIGLFQCLAIFLPGLSRSMATIVGGQQQKLSRKAAAEFSFFLAVPTMLGATLLKAYKLYKEGGIEIFREHMIVLLVGNIVAFIVALAAIKFFIGFLTRYGFKAFGYYRILVGGLLIVLMLSGVSLAV.

8 helical membrane-spanning segments follow: residues 1–21 (MTILQAIVLAIVEGLTEFLPV), 41–61 (FVRAFTVMIQFGAILSVLVLY), 87–107 (FDLYWKLLIALVPAVILGFLF), 115–135 (LGSVWVVAVVLFLGGIFMLFV), 147–167 (ITYPKAFVIGLFQCLAIFLPG), 186–206 (KAAAEFSFFLAVPTMLGATLL), 225–245 (IVLLVGNIVAFIVALAAIKFF), and 260–280 (YRILVGGLLIVLMLSGVSLAV).

Belongs to the UppP family.

The protein resides in the cell inner membrane. It carries out the reaction di-trans,octa-cis-undecaprenyl diphosphate + H2O = di-trans,octa-cis-undecaprenyl phosphate + phosphate + H(+). Its function is as follows. Catalyzes the dephosphorylation of undecaprenyl diphosphate (UPP). Confers resistance to bacitracin. The polypeptide is Undecaprenyl-diphosphatase (Porphyromonas gingivalis (strain ATCC 33277 / DSM 20709 / CIP 103683 / JCM 12257 / NCTC 11834 / 2561)).